The sequence spans 268 residues: Microtubule-associated protein RP/EB family member 1 (268 aa).

A2 bears the N-acetylalanine mark. In terms of domain architecture, Calponin-homology (CH) spans 14–116 (NLSRHDMLAW…FVQWFKKFFD (103 aa)). Position 66 is an N6-crotonyllysine (K66). A Phosphotyrosine modification is found at Y124. The segment at 124–268 (YDPVAARQGQ…GGPQEEQEEY (145 aa)) is interaction with MTUS2/TIP150. The interval 146-180 (LSKPKKPLGSSTAAPQRPIATQRTTAAPKAGPGMV) is disordered. Residues 154–170 (GSSTAAPQRPIATQRTT) are compositionally biased toward polar residues. S155 is modified (phosphoserine). The EB1 C-terminal domain occupies 185-255 (GVGNGDDEAA…LYATDEGFVI (71 aa)). The tract at residues 206–211 (TVEDLE) is interaction with APC. The tract at residues 208–268 (EDLEKERDFY…GGPQEEQEEY (61 aa)) is DCTN1-binding. At K220 the chain carries N6-acetyllysine. An APC-binding region spans residues 220 to 242 (KLRNIELICQENEGENDPVLQRI). The interaction with SKA1 stretch occupies residues 232–255 (EGENDPVLQRIVDILYATDEGFVI).

This sequence belongs to the MAPRE family. Homodimer. Heterodimer with MAPRE3. Interacts (via C-terminal residues 206-211) with APC (via C-terminal residues 2674-2845); the interaction inhibits association with and bundling of F-actin. Interacts with DCTN1, DIAPH1 and DIAPH2. Interacts with DCTN2, TERF1 and dynein intermediate chain. Interacts with CLASP2, DST, KIF2C and STIM1; probably required for their targeting to the growing microtubule plus ends. Interacts with MTUS2; interaction is direct and probably targets MTUS2 to microtubules. Interacts (via C-terminus) with SKA1 (via SXIP motif); the interaction is direct and stabilizes the kinetochore-microtubule attachment of the SKA1 complex. Interacts with APC2. Interacts with CLASP1. Interacts (via C-terminus) with CLIP1. Interacts with SLAIN2 and SLAIN1. Interacts with MACF1. Interacts with KIF18B; this interaction is required for efficient accumulation of KIF18B at microtubule plus ends. Interacts with MISP. Interacts with RABL2/RABL2A; binds preferentially to GTP-bound RABL2. Interacts with KCNAB2. Interacts with KNSTRN. Interacts with NCKAP5L. Interacts with AKAP9. Interacts with PDE4DIP isoform 2/MMG8/SMYLE; this interaction is required for its recruitment to the Golgi apparatus. May form a pericentrosomal complex with AKAP9, CDK5RAP2 and PDE4DIP isoform 2/MMG8/SMYLE; within this complex, MAPRE1 binding to CDK5RAP2 may be mediated by PDE4DIP. Contrary to other mammalian species, does not interact with CDK5RAP2, possibly due to the lack of conservation of the MAPRE1-binding motif in mouse CDK5RAP2. Interacts with AKNA. Interacts with GAS2L1, GAS2L2, and GAS2L3. Interacts with RARRES1 and AGBL2. In terms of processing, acetylation at Lys-220 by KAT2B/PCAF promotes dynamic kinetochore-microtubule interactions in early mitosis. Crotonylated by KAT5 during mitosis, promoting astral microtubule plasticity and dynamic connection between astral microtubules and the cortex during mitotic chromosome segregation, thereby ensuring accurate spindle positioning in mitosis. Decrotonylated by HDAC3. As to expression, expressed within the midpiece of sperm tail (at protein level).

The protein localises to the cytoplasm. The protein resides in the cytoskeleton. Its subcellular location is the microtubule organizing center. It is found in the centrosome. It localises to the spindle. The protein localises to the spindle pole. Its function is as follows. Plus-end tracking protein (+TIP) that binds to the plus-end of microtubules and regulates the dynamics of the microtubule cytoskeleton. Recruits other +TIP proteins to microtubules by binding to a conserved Ser-X-Leu-Pro (SXLP) motif in their polypeptide chains. Promotes cytoplasmic microtubule nucleation and elongation. Involved in mitotic spindle positioning by stabilizing microtubules and promoting dynamic connection between astral microtubules and the cortex during mitotic chromosome segregation. Assists chromosome alignment in metaphase by recruiting the SKA complex to the spindle and stabilizing its interactions with microtubule bundles (K-fibers). Also acts as a regulator of minus-end microtubule organization: interacts with the complex formed by AKAP9 and PDE4DIP, leading to recruit CAMSAP2 to the Golgi apparatus, thereby tethering non-centrosomal minus-end microtubules to the Golgi, an important step for polarized cell movement. Promotes elongation of CAMSAP2-decorated microtubule stretches on the minus-end of microtubules. Acts as a regulator of autophagosome transport via interaction with CAMSAP2. Functions downstream of Rho GTPases and DIAPH1 in stable microtubule formation. May play a role in cell migration. This Mus musculus (Mouse) protein is Microtubule-associated protein RP/EB family member 1 (Mapre1).